A 562-amino-acid polypeptide reads, in one-letter code: Arginine--tRNA ligase (562 aa).

A 'HIGH' region motif is present at residues Ala129–His139.

It belongs to the class-I aminoacyl-tRNA synthetase family. In terms of assembly, monomer.

It localises to the cytoplasm. It carries out the reaction tRNA(Arg) + L-arginine + ATP = L-arginyl-tRNA(Arg) + AMP + diphosphate. The polypeptide is Arginine--tRNA ligase (Xanthomonas oryzae pv. oryzae (strain KACC10331 / KXO85)).